The primary structure comprises 868 residues: Probable mixed-linked glucan synthase 3 (868 aa).

Residues 36-68 (ERKAAGGGGGGAKGKHWAAADKGERRAAKECGG) are disordered. Basic and acidic residues predominate over residues 53–68 (AAADKGERRAAKECGG). Transmembrane regions (helical) follow at residues 86 to 106 (LLHP…LFFG) and 116 to 136 (IMWF…SWLL). Residue aspartate 211 is part of the active site. Residues aspartate 412 and aspartate 414 each contribute to the substrate site. Aspartate 573 is a catalytic residue. A run of 6 helical transmembrane segments spans residues 649-669 (IYPV…MWLI), 686-706 (LLVI…WAGI), 717-737 (FFMI…VVNL), 771-791 (MLIP…VAIG), 810-830 (MGLL…LAIM), and 838-858 (IILV…YVAT).

It belongs to the glycosyltransferase 2 family. Plant cellulose synthase-like F subfamily.

It localises to the golgi apparatus membrane. May catalyze both beta-1,3 and beta-1,4 glycosidic linkage on beta-D-glucan. Essential for (1,3;1,4)-beta-D-glucans synthesis in grasses and cereals (Poaceae). The mixed-linked glucans (which are not present in walls of dicotyledons or most other monocotyledonous plants) are particularly important constituents of the walls of the starchy endosperm and aleurone cells of cereal grains such as oats, wheat, rice and barley. They can account for up to 70% by weight of the wall. The polypeptide is Probable mixed-linked glucan synthase 3 (CSLF3) (Oryza sativa subsp. japonica (Rice)).